The primary structure comprises 548 residues: Membrane protein insertase YidC (548 aa).

Residues 6–26 traverse the membrane as a helical segment; sequence NLLVIALLFVSFMIWQAWEQD. A disordered region spans residues 28-54; it reads NPQPQTQQTTQTTTTAAGSAADQGVPA. A compositionally biased stretch (low complexity) spans 29–42; the sequence is PQPQTQQTTQTTTT. Transmembrane regions (helical) follow at residues 350 to 370, 424 to 444, 458 to 478, and 499 to 519; these read FLGNWGFSIIVITFIVRGIMY, FPLIIQMPIFLALYYMLMGSI, LSAQDPYYILPILMGVTMFFI, and PVIFTVFFLWFPSGLVLYYIV.

Belongs to the OXA1/ALB3/YidC family. Type 1 subfamily. Interacts with the Sec translocase complex via SecD. Specifically interacts with transmembrane segments of nascent integral membrane proteins during membrane integration.

Its subcellular location is the cell inner membrane. In terms of biological role, required for the insertion and/or proper folding and/or complex formation of integral membrane proteins into the membrane. Involved in integration of membrane proteins that insert both dependently and independently of the Sec translocase complex, as well as at least some lipoproteins. Aids folding of multispanning membrane proteins. The sequence is that of Membrane protein insertase YidC from Citrobacter koseri (strain ATCC BAA-895 / CDC 4225-83 / SGSC4696).